Reading from the N-terminus, the 256-residue chain is Thiazole synthase (256 aa).

The Schiff-base intermediate with DXP role is filled by lysine 96. Residues glycine 157, 183–184, and 205–206 each bind 1-deoxy-D-xylulose 5-phosphate; these read AG and NT.

The protein belongs to the ThiG family. Homotetramer. Forms heterodimers with either ThiH or ThiS.

It localises to the cytoplasm. It carries out the reaction [ThiS sulfur-carrier protein]-C-terminal-Gly-aminoethanethioate + 2-iminoacetate + 1-deoxy-D-xylulose 5-phosphate = [ThiS sulfur-carrier protein]-C-terminal Gly-Gly + 2-[(2R,5Z)-2-carboxy-4-methylthiazol-5(2H)-ylidene]ethyl phosphate + 2 H2O + H(+). It functions in the pathway cofactor biosynthesis; thiamine diphosphate biosynthesis. In terms of biological role, catalyzes the rearrangement of 1-deoxy-D-xylulose 5-phosphate (DXP) to produce the thiazole phosphate moiety of thiamine. Sulfur is provided by the thiocarboxylate moiety of the carrier protein ThiS. In vitro, sulfur can be provided by H(2)S. The sequence is that of Thiazole synthase from Bacillus cereus (strain AH187).